The primary structure comprises 229 residues: Large ribosomal subunit protein uL1 (229 aa).

It belongs to the universal ribosomal protein uL1 family. As to quaternary structure, part of the 50S ribosomal subunit.

Binds directly to 23S rRNA. The L1 stalk is quite mobile in the ribosome, and is involved in E site tRNA release. Its function is as follows. Protein L1 is also a translational repressor protein, it controls the translation of the L11 operon by binding to its mRNA. This is Large ribosomal subunit protein uL1 from Streptococcus uberis (strain ATCC BAA-854 / 0140J).